Reading from the N-terminus, the 454-residue chain is Glutamyl-tRNA reductase (454 aa).

Residues 49–52 (TCNR), S109, 114–116 (ETQ), and Q120 contribute to the substrate site. C50 functions as the Nucleophile in the catalytic mechanism. 189–194 (GAGKMS) is a binding site for NADP(+). A disordered region spans residues 434 to 454 (NDKNKQTSSSREQVLVSRFPD).

The protein belongs to the glutamyl-tRNA reductase family. In terms of assembly, homodimer.

The catalysed reaction is (S)-4-amino-5-oxopentanoate + tRNA(Glu) + NADP(+) = L-glutamyl-tRNA(Glu) + NADPH + H(+). The protein operates within porphyrin-containing compound metabolism; protoporphyrin-IX biosynthesis; 5-aminolevulinate from L-glutamyl-tRNA(Glu): step 1/2. In terms of biological role, catalyzes the NADPH-dependent reduction of glutamyl-tRNA(Glu) to glutamate 1-semialdehyde (GSA). This is Glutamyl-tRNA reductase from Brevibacillus brevis (strain 47 / JCM 6285 / NBRC 100599).